Here is a 568-residue protein sequence, read N- to C-terminus: Lariat debranching enzyme (568 aa).

A divalent metal cation is bound by residues Cys8, His10, Asp39, and Asn84. Residues 124 to 154 are lariat recognition loop; sequence SGIFKSHDFKKGHFEFPPYNPETLRSVYHIR. His174, His226, and His228 together coordinate a divalent metal cation. Residues 388–568 are disordered; sequence IYGERGGKGA…TAVEDEESDS (181 aa). Positions 417-428 are enriched in polar residues; sequence PSDTSGLSSSYN. Positions 432–444 are enriched in acidic residues; that stretch reads ITIEDEWEEEEDG. The span at 467–480 shows a compositional bias: basic and acidic residues; it reads DSDRDSSPQRETAK. Residue Thr478 is modified to Phosphothreonine. The span at 534–549 shows a compositional bias: low complexity; that stretch reads GETTQSSAGQTGGTPQ. Ser568 bears the Phosphoserine mark.

The protein belongs to the lariat debranching enzyme family. Requires Fe(2+) as cofactor. The cofactor is Zn(2+). It depends on Mn(2+) as a cofactor.

The protein resides in the nucleus. Its activity is regulated as follows. Active in presence of diverse metals including Fe(2+), Zn(2+), Mn(2+). Also activated by Ca(2+). Binds two metal cations in two adjacent alpha and beta metal-binding pockets. Its function is as follows. Cleaves the 2'-5' phosphodiester linkage at the branch point of excised lariat intron RNA and converts them into linear molecules that can be subsequently degraded, thereby facilitating ribonucleotide turnover. Linked to its role in pre-mRNA processing mechanism, may also participate in retrovirus replication and have an antiviral cell-intrinsic defense function. The chain is Lariat debranching enzyme (dbr1) from Danio rerio (Zebrafish).